Reading from the N-terminus, the 76-residue chain is MSKFFRRRKFCKFTAEGVKEIDYKDLNTLRQYLTENGKIVPSRVTGTKSKYQRQLATAVKRSRFLALIPYTDNHDV.

Belongs to the bacterial ribosomal protein bS18 family. In terms of assembly, part of the 30S ribosomal subunit. Forms a tight heterodimer with protein bS6.

Binds as a heterodimer with protein bS6 to the central domain of the 16S rRNA, where it helps stabilize the platform of the 30S subunit. The sequence is that of Small ribosomal subunit protein bS18 from Xanthomonas campestris pv. campestris (strain 8004).